The following is a 348-amino-acid chain: MSVFCLQAKPTTVEILEGIDKDIQILEDYSVKYQRQMKAVVGRLLLYSILLYLMAGVVVYSWYLPEQLMGRLVLGLPFLLFPLLVWILRKVLILFFARRTEKNNFKLEDLKAQKRKILEDVMETETYKNAKLILERFDPESKKKTDFDSTPVGPQMTPKPGQELRHRNVVPQTPPASVNSASGAAARPPLASGPAYPGRSSHSAPGGPPERNLLAIAAQQSLMRKFVTPGTPIPGVGLHPPGPPLARPVLPRERGVLDRLIEYLVGDGPQNRLALVCQQCLSHNGMALKEEFEYVAFRCAYCYFLNPARKTRPQAPRLPETAGEPKLPCDLNSSSCAAEEDKQSDSGD.

Residues 1–43 lie on the Cytoplasmic side of the membrane; it reads MSVFCLQAKPTTVEILEGIDKDIQILEDYSVKYQRQMKAVVGR. A helical membrane pass occupies residues 44-64; the sequence is LLLYSILLYLMAGVVVYSWYL. At 65-67 the chain is on the lumenal side; it reads PEQ. A helical membrane pass occupies residues 68–88; sequence LMGRLVLGLPFLLFPLLVWIL. Residues 89–348 are Cytoplasmic-facing; that stretch reads RKVLILFFAR…EEDKQSDSGD (260 aa). A coiled-coil region spans residues 105–126; that stretch reads FKLEDLKAQKRKILEDVMETET. The disordered stretch occupies residues 142-211; it reads KKKTDFDSTP…HSAPGGPPER (70 aa). The C4-type; plays a role in ER morphology zinc finger occupies 277 to 302; sequence CQQCLSHNGMALKEEFEYVAFRCAYC. The segment at 313–348 is disordered; that stretch reads PQAPRLPETAGEPKLPCDLNSSSCAAEEDKQSDSGD. A compositionally biased stretch (basic and acidic residues) spans 339–348; the sequence is EEDKQSDSGD.

It belongs to the lunapark family. Homodimer; homodimerization requires the C4-type zinc finger motif and decreases during mitosis in a phosphorylation-dependent manner. Post-translationally, phosphorylated. Phosphorylation occurs during interphase. Phosphorylation also occurs during mitosis; these phosphorylations reduce both its homodimerization and the ER three-way tubular junction formation.

It localises to the endoplasmic reticulum membrane. Its function is as follows. Endoplasmic reticulum (ER)-shaping membrane protein that plays a role in determining ER morphology. Involved in the stabilization of nascent three-way ER tubular junctions within the ER network. May also play a role as a curvature-stabilizing protein within three-way ER tubular junction network. This chain is Endoplasmic reticulum junction formation protein lunapark-A (lnpka), found in Takifugu rubripes (Japanese pufferfish).